Here is a 1172-residue protein sequence, read N- to C-terminus: DNA-directed RNA polymerase subunit beta (1172 aa).

It belongs to the RNA polymerase beta chain family. The RNAP catalytic core consists of 2 alpha, 1 beta, 1 beta' and 1 omega subunit. When a sigma factor is associated with the core the holoenzyme is formed, which can initiate transcription.

It catalyses the reaction RNA(n) + a ribonucleoside 5'-triphosphate = RNA(n+1) + diphosphate. In terms of biological role, DNA-dependent RNA polymerase catalyzes the transcription of DNA into RNA using the four ribonucleoside triphosphates as substrates. This chain is DNA-directed RNA polymerase subunit beta, found in Mycobacterium sp. (strain JLS).